Reading from the N-terminus, the 219-residue chain is 2-hydroxy-3-keto-5-methylthiopentenyl-1-phosphate phosphatase (219 aa).

Belongs to the HAD-like hydrolase superfamily. MtnX family.

It carries out the reaction 2-hydroxy-5-methylsulfanyl-3-oxopent-1-enyl phosphate + H2O = 1,2-dihydroxy-5-(methylsulfanyl)pent-1-en-3-one + phosphate. The protein operates within amino-acid biosynthesis; L-methionine biosynthesis via salvage pathway; L-methionine from S-methyl-5-thio-alpha-D-ribose 1-phosphate: step 4/6. Functionally, dephosphorylates 2-hydroxy-3-keto-5-methylthiopentenyl-1-phosphate (HK-MTPenyl-1-P) yielding 1,2-dihydroxy-3-keto-5-methylthiopentene (DHK-MTPene). In Bacillus thuringiensis subsp. konkukian (strain 97-27), this protein is 2-hydroxy-3-keto-5-methylthiopentenyl-1-phosphate phosphatase.